The following is a 334-amino-acid chain: 3-dehydroquinate synthase (334 aa).

It belongs to the archaeal-type DHQ synthase family.

The enzyme catalyses 2-amino-2,3,7-trideoxy-D-lyxo-hept-6-ulosonate + NAD(+) + H2O = 3-dehydroquinate + NH4(+) + NADH + H(+). In terms of biological role, catalyzes the oxidative deamination and cyclization of 2-amino-3,7-dideoxy-D-threo-hept-6-ulosonic acid (ADH) to yield 3-dehydroquinate (DHQ), which is fed into the canonical shikimic pathway of aromatic amino acid biosynthesis. The sequence is that of 3-dehydroquinate synthase from Korarchaeum cryptofilum (strain OPF8).